The following is a 362-amino-acid chain: Chorismate synthase (362 aa).

Arg47 contributes to the NADP(+) binding site. Residues 124–126 (RSS), Gly286, 301–305 (KPTAT), and Arg327 contribute to the FMN site.

The protein belongs to the chorismate synthase family. As to quaternary structure, homotetramer. FMNH2 serves as cofactor.

The enzyme catalyses 5-O-(1-carboxyvinyl)-3-phosphoshikimate = chorismate + phosphate. It functions in the pathway metabolic intermediate biosynthesis; chorismate biosynthesis; chorismate from D-erythrose 4-phosphate and phosphoenolpyruvate: step 7/7. In terms of biological role, catalyzes the anti-1,4-elimination of the C-3 phosphate and the C-6 proR hydrogen from 5-enolpyruvylshikimate-3-phosphate (EPSP) to yield chorismate, which is the branch point compound that serves as the starting substrate for the three terminal pathways of aromatic amino acid biosynthesis. This reaction introduces a second double bond into the aromatic ring system. In Gloeothece citriformis (strain PCC 7424) (Cyanothece sp. (strain PCC 7424)), this protein is Chorismate synthase.